A 711-amino-acid chain; its full sequence is MLNFFAAAPRGYEYALSLELAEFGAAEIKESVAGVYFSAPLNLAYRITLWSRLASRIILVIYKGPCENPEQLYNAAYCIDWQTHFSNKSSFSIDFHGVGGFIKNSQFGALKIKDAVVDRFRDDGCPRPDVARVDADFKIDAHYRRGQITLGINFSGPALHQRGYRSTTGEAPLKENLAANMLVRSGWQQSPKDLLDPFCGSGTILIEAAMMACDIAPALQRRRFGFEHWLRHQEADWQELLAEAKARASIGTKRCEIKFYGSDIDSRLVALAKRNAQNAGVAELIELSVSNALNVTPPVEQGYLITNPPYGERLGNVTSLLQLYYQLGDKLKAEFGGWQVAVLNSDIELLSALKLKADKQMKMYNGALECAFNLYTLHANSTRRLDPSQVLSQGGEVSEVATAFSNRIKKNHKQLSKWAQREGIDSYRLYDADIPEYNVAVDIYLDHVVIQEYSAPKSIPEAVTKRRLTDVLLVLPQAIGVDPDKIILKTRERQKGTNQYQKLDATKLELVTTEYGAKFKLNLKDYLDTGLFLDHRLTRKLVGEKSKGRDVLNLFAYTGSASVHAALGGAKSVTTVDMSNTYLNWAQDNFELNGLKGKQYQFIQGDCLQWIDDCDQQYDLIFIDPPTFSNSKRMEDSFDVQRDHVKLLSALVKLLRPGGEILFSNNKRKFKMDSEALSALGLSITNLDKQTLPLDYKRNPHIHNTWLIQHA.

The THUMP domain occupies 43–154 (LAYRITLWSR…RGQITLGINF (112 aa)).

The protein belongs to the methyltransferase superfamily. RlmKL family.

It is found in the cytoplasm. It catalyses the reaction guanosine(2445) in 23S rRNA + S-adenosyl-L-methionine = N(2)-methylguanosine(2445) in 23S rRNA + S-adenosyl-L-homocysteine + H(+). It carries out the reaction guanosine(2069) in 23S rRNA + S-adenosyl-L-methionine = N(2)-methylguanosine(2069) in 23S rRNA + S-adenosyl-L-homocysteine + H(+). Functionally, specifically methylates the guanine in position 2445 (m2G2445) and the guanine in position 2069 (m7G2069) of 23S rRNA. In Shewanella loihica (strain ATCC BAA-1088 / PV-4), this protein is Ribosomal RNA large subunit methyltransferase K/L.